Reading from the N-terminus, the 718-residue chain is Phenylalanine--tRNA ligase beta subunit (718 aa).

In terms of domain architecture, tRNA-binding spans 40 to 153 (FLNVSKIKFG…KADLKQDPID (114 aa)). The B5 domain maps to 387–462 (DKKESFNFVW…RFYGYENLVF (76 aa)). Mg(2+) is bound by residues Asp-440, Asp-446, Glu-449, and Glu-450.

This sequence belongs to the phenylalanyl-tRNA synthetase beta subunit family. Type 1 subfamily. In terms of assembly, tetramer of two alpha and two beta subunits. Requires Mg(2+) as cofactor.

The protein localises to the cytoplasm. It carries out the reaction tRNA(Phe) + L-phenylalanine + ATP = L-phenylalanyl-tRNA(Phe) + AMP + diphosphate + H(+). The sequence is that of Phenylalanine--tRNA ligase beta subunit from Mycoplasmopsis pulmonis (strain UAB CTIP) (Mycoplasma pulmonis).